The following is a 305-amino-acid chain: Probable lipid kinase YegS-like (305 aa).

The 129-residue stretch at 1–129 folds into the DAGKc domain; the sequence is MTQRRAMLIL…VDLGEVGGKL (129 aa). ATP contacts are provided by residues Thr-39, 65-71, and Thr-92; that span reads GDGTLRD. Mg(2+) is bound by residues Leu-210, Asp-213, and Leu-215. The active-site Proton acceptor is Glu-268.

The protein belongs to the diacylglycerol/lipid kinase family. YegS lipid kinase subfamily. The cofactor is Mg(2+). Requires Ca(2+) as cofactor.

Its subcellular location is the cytoplasm. Probably phosphorylates lipids; the in vivo substrate is unknown. The protein is Probable lipid kinase YegS-like of Pseudomonas syringae pv. syringae (strain B728a).